A 403-amino-acid chain; its full sequence is Multifunctional CCA protein (403 aa).

ATP-binding residues include G8 and R11. Residues G8 and R11 each coordinate CTP. Residues D21 and D23 each contribute to the Mg(2+) site. ATP contacts are provided by R91, R137, and R140. CTP-binding residues include R91, R137, and R140. Residues 228–329 enclose the HD domain; the sequence is TGIHTLMVAK…LKVLGLLDVW (102 aa).

The protein belongs to the tRNA nucleotidyltransferase/poly(A) polymerase family. Bacterial CCA-adding enzyme type 1 subfamily. Monomer. Can also form homodimers and oligomers. Requires Mg(2+) as cofactor. Ni(2+) serves as cofactor.

The catalysed reaction is a tRNA precursor + 2 CTP + ATP = a tRNA with a 3' CCA end + 3 diphosphate. The enzyme catalyses a tRNA with a 3' CCA end + 2 CTP + ATP = a tRNA with a 3' CCACCA end + 3 diphosphate. Catalyzes the addition and repair of the essential 3'-terminal CCA sequence in tRNAs without using a nucleic acid template. Adds these three nucleotides in the order of C, C, and A to the tRNA nucleotide-73, using CTP and ATP as substrates and producing inorganic pyrophosphate. tRNA 3'-terminal CCA addition is required both for tRNA processing and repair. Also involved in tRNA surveillance by mediating tandem CCA addition to generate a CCACCA at the 3' terminus of unstable tRNAs. While stable tRNAs receive only 3'-terminal CCA, unstable tRNAs are marked with CCACCA and rapidly degraded. In Vibrio cholerae serotype O1 (strain ATCC 39541 / Classical Ogawa 395 / O395), this protein is Multifunctional CCA protein.